The primary structure comprises 325 residues: Solute carrier family 35 member B1 (325 aa).

8 consecutive transmembrane segments (helical) span residues 18–38, 54–74, 88–108, 139–159, 171–191, 213–233, 246–266, and 288–308; these read PVCFLGVFACYFYYGILQESI, FALSLVFIQCVINAAFAKLLI, WLYAACSLSYLGAMVSSNSAL, YPLAKYLCVLLIVTGVALFMY, IFGYGELLLLLSLTLDGLTGV, LWSTLFLGAGILFTGELWEFL, ILLFGLTSALGQSFIFMTVVY, and VILFANPISTMQWVGTVLVFL. Residues 321 to 325 carry the Di-lysine motif motif; that stretch reads KKTSH.

This sequence belongs to the nucleotide-sugar transporter family. SLC35B subfamily.

Its subcellular location is the endoplasmic reticulum membrane. Probable sugar transporter. This is Solute carrier family 35 member B1 (SLC35B1) from Gallus gallus (Chicken).